The following is a 273-amino-acid chain: Bifunctional protein FolD (273 aa).

Residues 152 to 154, Thr-179, and Ile-220 contribute to the NADP(+) site; that span reads GRS.

This sequence belongs to the tetrahydrofolate dehydrogenase/cyclohydrolase family. As to quaternary structure, homodimer.

It catalyses the reaction (6R)-5,10-methylene-5,6,7,8-tetrahydrofolate + NADP(+) = (6R)-5,10-methenyltetrahydrofolate + NADPH. The enzyme catalyses (6R)-5,10-methenyltetrahydrofolate + H2O = (6R)-10-formyltetrahydrofolate + H(+). The protein operates within one-carbon metabolism; tetrahydrofolate interconversion. In terms of biological role, catalyzes the oxidation of 5,10-methylenetetrahydrofolate to 5,10-methenyltetrahydrofolate and then the hydrolysis of 5,10-methenyltetrahydrofolate to 10-formyltetrahydrofolate. The protein is Bifunctional protein FolD of Petrotoga mobilis (strain DSM 10674 / SJ95).